The sequence spans 219 residues: Protein Ac132 (219 aa).

Positions 1–34 (MSDKTPTKKGGSHAMTLRERGVTKPPKKSEKLQQ) are disordered. Residues 16–33 (TLRERGVTKPPKKSEKLQ) are compositionally biased toward basic and acidic residues. Residues 103 to 134 (YPMAYFVNTDYKLKLECARIRSDLLYKNKNEV) are NEBU-like domain.

As to quaternary structure, interacts with viral envelope protein E18 and the DNA-binding protein p6.9.

The protein localises to the host cytoplasm. Its subcellular location is the host nucleus. The protein resides in the virion. In terms of biological role, plays an essential role in nucleocapsid entry in host nucleus. May act by binding and stabilizing F-actin in the infected cell, which might attach to nucleocapsids and then push the nucleocapsids into the nucleus. This chain is Protein Ac132 (Ac132), found in Autographa californica nuclear polyhedrosis virus (AcMNPV).